The chain runs to 457 residues: V-type ATP synthase beta chain (457 aa).

Belongs to the ATPase alpha/beta chains family.

In terms of biological role, produces ATP from ADP in the presence of a proton gradient across the membrane. The V-type beta chain is a regulatory subunit. The protein is V-type ATP synthase beta chain of Clostridioides difficile (strain 630) (Peptoclostridium difficile).